The sequence spans 436 residues: Glutamyl-tRNA reductase (436 aa).

Substrate is bound by residues 50–53 (TCNR), serine 110, 115–117 (ETQ), and glutamine 121. The active-site Nucleophile is cysteine 51. An NADP(+)-binding site is contributed by 190-195 (GLGEMS).

The protein belongs to the glutamyl-tRNA reductase family. In terms of assembly, homodimer.

The catalysed reaction is (S)-4-amino-5-oxopentanoate + tRNA(Glu) + NADP(+) = L-glutamyl-tRNA(Glu) + NADPH + H(+). It participates in porphyrin-containing compound metabolism; protoporphyrin-IX biosynthesis; 5-aminolevulinate from L-glutamyl-tRNA(Glu): step 1/2. Functionally, catalyzes the NADPH-dependent reduction of glutamyl-tRNA(Glu) to glutamate 1-semialdehyde (GSA). This Wolinella succinogenes (strain ATCC 29543 / DSM 1740 / CCUG 13145 / JCM 31913 / LMG 7466 / NCTC 11488 / FDC 602W) (Vibrio succinogenes) protein is Glutamyl-tRNA reductase.